Here is a 499-residue protein sequence, read N- to C-terminus: Endoglucanase (499 aa).

The N-terminal stretch at 1–29 (MKRSISIFITCLLITLLTMGGMIASPASA) is a signal peptide. Residues histidine 65, 69–70 (WY), tyrosine 96, and histidine 131 contribute to the substrate site. Glutamate 169 (proton donor) is an active-site residue. Tyrosine 231 contributes to the substrate binding site. Catalysis depends on glutamate 257, which acts as the Nucleophile. Residues 263 to 264 (AS), tryptophan 291, and 296 to 298 (KQE) each bind substrate. Residues 350 to 499 (QENGISVQYR…GKLIWGTEPN (150 aa)) form the CBM3 domain.

Belongs to the glycosyl hydrolase 5 (cellulase A) family.

It catalyses the reaction Endohydrolysis of (1-&gt;4)-beta-D-glucosidic linkages in cellulose, lichenin and cereal beta-D-glucans.. This is Endoglucanase (eglS) from Bacillus subtilis (strain 168).